The following is a 189-amino-acid chain: NADH-quinone oxidoreductase subunit B (189 aa).

[4Fe-4S] cluster contacts are provided by cysteine 39, cysteine 40, cysteine 104, and cysteine 135.

It belongs to the complex I 20 kDa subunit family. In terms of assembly, NDH-1 is composed of 14 different subunits. Subunits NuoB, C, D, E, F, and G constitute the peripheral sector of the complex. The cofactor is [4Fe-4S] cluster.

The protein resides in the cell inner membrane. It carries out the reaction a quinone + NADH + 5 H(+)(in) = a quinol + NAD(+) + 4 H(+)(out). In terms of biological role, NDH-1 shuttles electrons from NADH, via FMN and iron-sulfur (Fe-S) centers, to quinones in the respiratory chain. The immediate electron acceptor for the enzyme in this species is believed to be a menaquinone. Couples the redox reaction to proton translocation (for every two electrons transferred, four hydrogen ions are translocated across the cytoplasmic membrane), and thus conserves the redox energy in a proton gradient. The polypeptide is NADH-quinone oxidoreductase subunit B (Chlorobaculum tepidum (strain ATCC 49652 / DSM 12025 / NBRC 103806 / TLS) (Chlorobium tepidum)).